The sequence spans 91 residues: Mercuric transport protein periplasmic component (91 aa).

Residues 1 to 19 form the signal peptide; the sequence is MKKLFASLALAAAVAPVWA. The region spanning 22–88 is the HMA domain; it reads QTVTLAVPGM…ATADAGYPSS (67 aa). Hg(2+)-binding residues include C33 and C36.

It belongs to the MerP family. In terms of assembly, monomer.

Its subcellular location is the periplasm. Its function is as follows. Involved in mercury resistance. Acts as a mercury scavenger that specifically binds to a mercuric ion in the periplasm and probably passes it to the cytoplasmic mercuric reductase MerA via the mercuric transport protein MerT. The sequence is that of Mercuric transport protein periplasmic component from Shigella flexneri.